The chain runs to 280 residues: Diaminopimelate epimerase (280 aa).

2 residues coordinate substrate: asparagine 15 and asparagine 66. Cysteine 75 acts as the Proton donor in catalysis. Residues 76 to 77 (GN), asparagine 163, asparagine 196, and 214 to 215 (ER) contribute to the substrate site. The active-site Proton acceptor is the cysteine 223. Residue 224 to 225 (GT) coordinates substrate.

Belongs to the diaminopimelate epimerase family. As to quaternary structure, homodimer.

Its subcellular location is the cytoplasm. The enzyme catalyses (2S,6S)-2,6-diaminopimelate = meso-2,6-diaminopimelate. Its pathway is amino-acid biosynthesis; L-lysine biosynthesis via DAP pathway; DL-2,6-diaminopimelate from LL-2,6-diaminopimelate: step 1/1. Functionally, catalyzes the stereoinversion of LL-2,6-diaminopimelate (L,L-DAP) to meso-diaminopimelate (meso-DAP), a precursor of L-lysine and an essential component of the bacterial peptidoglycan. This chain is Diaminopimelate epimerase, found in Phocaeicola vulgatus (strain ATCC 8482 / DSM 1447 / JCM 5826 / CCUG 4940 / NBRC 14291 / NCTC 11154) (Bacteroides vulgatus).